A 217-amino-acid chain; its full sequence is Probable transaldolase (217 aa).

Lysine 83 (schiff-base intermediate with substrate) is an active-site residue.

Belongs to the transaldolase family. Type 3B subfamily.

The protein localises to the cytoplasm. The enzyme catalyses D-sedoheptulose 7-phosphate + D-glyceraldehyde 3-phosphate = D-erythrose 4-phosphate + beta-D-fructose 6-phosphate. Its pathway is carbohydrate degradation; pentose phosphate pathway; D-glyceraldehyde 3-phosphate and beta-D-fructose 6-phosphate from D-ribose 5-phosphate and D-xylulose 5-phosphate (non-oxidative stage): step 2/3. Its function is as follows. Transaldolase is important for the balance of metabolites in the pentose-phosphate pathway. This is Probable transaldolase from Bartonella quintana (strain Toulouse) (Rochalimaea quintana).